Consider the following 360-residue polypeptide: Plastid lipid-associated protein 3, chloroplastic (360 aa).

A compositionally biased stretch (polar residues) spans 1–37 (MATLFTVTTTSRPFPANPSKTFSPSISLKPNALSFSL). A chloroplast-targeting transit peptide spans 1 to 52 (MATLFTVTTTSRPFPANPSKTFSPSISLKPNALSFSLTHHRPPRPLRFSKIR). The tract at residues 1-130 (MATLFTVTTT…EWEEREADDG (130 aa)) is disordered. Residues 38–50 (THHRPPRPLRFSK) are compositionally biased toward basic residues. The segment covering 53-68 (SSLPSESDSEPEGGYS) has biased composition (low complexity). The span at 117–127 (TNEDEWEEREA) shows a compositional bias: acidic residues.

The protein belongs to the PAP/fibrillin family. Ubiquitous expression among various organs, but only at a very low level.

It is found in the plastid. The protein localises to the chloroplast. In Brassica campestris (Field mustard), this protein is Plastid lipid-associated protein 3, chloroplastic (PAP3).